Consider the following 61-residue polypeptide: uncharacterized protein (61 aa).

2 consecutive transmembrane segments (helical) span residues 7 to 24 and 29 to 48; these read FNVF…YKLF and VSTT…IVGL.

It is found in the cell membrane. This is an uncharacterized protein from Bacillus subtilis (strain 168).